The sequence spans 162 residues: MALNLQDKKAIVAEVNEAASGALSAVVADSRGVEVGAMTSLRKQAREAGVYMKVVRNTLARRAVQGTDYECLTDTFTGPTLIAFSNEHPGAAARLFKDFAKENKDFEIKAAAFEGALTDAEVLATLPTYDEAIARLMMCMKEASAGKLVRTIAAIRDQKEAA.

It belongs to the universal ribosomal protein uL10 family. Part of the ribosomal stalk of the 50S ribosomal subunit. The N-terminus interacts with L11 and the large rRNA to form the base of the stalk. The C-terminus forms an elongated spine to which L12 dimers bind in a sequential fashion forming a multimeric L10(L12)X complex.

Its function is as follows. Forms part of the ribosomal stalk, playing a central role in the interaction of the ribosome with GTP-bound translation factors. The polypeptide is Large ribosomal subunit protein uL10 (Vibrio parahaemolyticus serotype O3:K6 (strain RIMD 2210633)).